Consider the following 243-residue polypeptide: 2-C-methyl-D-erythritol 4-phosphate cytidylyltransferase (243 aa).

Belongs to the IspD/TarI cytidylyltransferase family. IspD subfamily. Homodimer.

It carries out the reaction 2-C-methyl-D-erythritol 4-phosphate + CTP + H(+) = 4-CDP-2-C-methyl-D-erythritol + diphosphate. The protein operates within isoprenoid biosynthesis; isopentenyl diphosphate biosynthesis via DXP pathway; isopentenyl diphosphate from 1-deoxy-D-xylulose 5-phosphate: step 2/6. Its function is as follows. Catalyzes the formation of 4-diphosphocytidyl-2-C-methyl-D-erythritol from CTP and 2-C-methyl-D-erythritol 4-phosphate (MEP). In Photorhabdus laumondii subsp. laumondii (strain DSM 15139 / CIP 105565 / TT01) (Photorhabdus luminescens subsp. laumondii), this protein is 2-C-methyl-D-erythritol 4-phosphate cytidylyltransferase.